A 568-amino-acid polypeptide reads, in one-letter code: Serine/threonine-protein kinase RIO1 (568 aa).

Disordered stretches follow at residues 14-70 (GQFD…DDDW) and 83-109 (YVWNGGSNPQANRQTSDSSSAKMSTPA). A phosphoserine mark is found at serine 21 and serine 22. Basic and acidic residues predominate over residues 24–38 (SENRDLKTVKEKDDI). A compositionally biased stretch (acidic residues) spans 51–70 (GEGEIEDEEEEGYDDDDDDW). A compositionally biased stretch (polar residues) spans 87-105 (GGSNPQANRQTSDSSSAKM). The 300-residue stretch at 180–479 (TEINGCISTG…TGLKKDLSGV (300 aa)) folds into the Protein kinase domain. ATP-binding residues include lysine 208, serine 278, and isoleucine 280. The Proton acceptor role is filled by aspartate 324. Residues asparagine 329 and aspartate 341 each coordinate Mg(2+). Aspartate 341 serves as the catalytic 4-aspartylphosphate intermediate. A disordered region spans residues 490-568 (VEERTCSDSE…EKTAKTKKGK (79 aa)). Residues 497–513 (DSEDIGSSECSDTDSEE) show a composition bias toward acidic residues. Residues 514 to 543 (QGDHARPKKHTTDPDIDKKERKKMVKEAQR) show a composition bias toward basic and acidic residues. Residues 544–568 (EKRKNKIPKHVKKRKEKTAKTKKGK) are compositionally biased toward basic residues.

The protein belongs to the protein kinase superfamily. RIO-type Ser/Thr kinase family. In terms of assembly, associates with the precursor of the 40S ribosome subunit. Interacts (via its N-terminus) with PRMT5 (via its N-terminus). Interacts with WDR77. Found in a PRMT5 complex composed of PRMT5, WDR77 and RIOK1. Interacts (via its C-terminus) with NCL; this interaction targets NCL for PRTM5 methylation. The cofactor is Mg(2+).

The protein localises to the cytoplasm. It localises to the cytosol. The catalysed reaction is L-seryl-[protein] + ATP = O-phospho-L-seryl-[protein] + ADP + H(+). The enzyme catalyses L-threonyl-[protein] + ATP = O-phospho-L-threonyl-[protein] + ADP + H(+). It carries out the reaction ATP + H2O = ADP + phosphate + H(+). Its function is as follows. Involved in the final steps of cytoplasmic maturation of the 40S ribosomal subunit. Involved in processing of 18S-E pre-rRNA to the mature 18S rRNA. Required for the recycling of NOB1 and PNO1 from the late 40S precursor. The association with the very late 40S subunit intermediate may involve a translation-like checkpoint point cycle preceeding the binding to the 60S ribosomal subunit. Despite the protein kinase domain is proposed to act predominantly as an ATPase. The catalytic activity regulates its dynamic association with the 40S subunit. In addition to its role in ribosomal biogenesis acts as an adapter protein by recruiting NCL/nucleolin the to PRMT5 complex for its symmetrical methylation. This is Serine/threonine-protein kinase RIO1 from Homo sapiens (Human).